The chain runs to 190 residues: Putative manganese efflux pump MntP (190 aa).

6 consecutive transmembrane segments (helical) span residues 3–23 (FLQI…CSVV), 37–57 (LVLA…GWVI), 72–88 (HWIA…KMIW), 111–131 (IILG…LAFV), 138–158 (VALS…WIGH), and 164–184 (FGKW…ANIV).

The protein belongs to the MntP (TC 9.B.29) family.

The protein localises to the cell membrane. In terms of biological role, probably functions as a manganese efflux pump. The sequence is that of Putative manganese efflux pump MntP from Corynebacterium glutamicum (strain R).